Here is a 151-residue protein sequence, read N- to C-terminus: Large ribosomal subunit protein bL9 (151 aa).

Belongs to the bacterial ribosomal protein bL9 family.

In terms of biological role, binds to the 23S rRNA. This Francisella tularensis subsp. holarctica (strain LVS) protein is Large ribosomal subunit protein bL9.